A 457-amino-acid polypeptide reads, in one-letter code: Glutamyl-tRNA reductase (457 aa).

Residues 49-52 (TCNR), serine 109, 114-116 (ETQ), and glutamine 120 contribute to the substrate site. Cysteine 50 serves as the catalytic Nucleophile. Residue 189–194 (GAGKMG) participates in NADP(+) binding.

This sequence belongs to the glutamyl-tRNA reductase family. In terms of assembly, homodimer.

The enzyme catalyses (S)-4-amino-5-oxopentanoate + tRNA(Glu) + NADP(+) = L-glutamyl-tRNA(Glu) + NADPH + H(+). It participates in porphyrin-containing compound metabolism; protoporphyrin-IX biosynthesis; 5-aminolevulinate from L-glutamyl-tRNA(Glu): step 1/2. In terms of biological role, catalyzes the NADPH-dependent reduction of glutamyl-tRNA(Glu) to glutamate 1-semialdehyde (GSA). The protein is Glutamyl-tRNA reductase of Oceanobacillus iheyensis (strain DSM 14371 / CIP 107618 / JCM 11309 / KCTC 3954 / HTE831).